The sequence spans 567 residues: Urease subunit alpha (567 aa).

In terms of domain architecture, Urease spans 129 to 567 (GGIDAHIHFI…LPLAQRYFLF (439 aa)). 3 residues coordinate Ni(2+): His-134, His-136, and Lys-217. Lys-217 bears the N6-carboxylysine mark. Substrate is bound at residue His-219. Ni(2+) contacts are provided by His-246 and His-272. His-320 acts as the Proton donor in catalysis. Position 360 (Asp-360) interacts with Ni(2+).

Belongs to the metallo-dependent hydrolases superfamily. Urease alpha subunit family. In terms of assembly, heterotrimer of UreA (gamma), UreB (beta) and UreC (alpha) subunits. Three heterotrimers associate to form the active enzyme. Requires Ni cation as cofactor. Post-translationally, carboxylation allows a single lysine to coordinate two nickel ions.

The protein resides in the cytoplasm. The enzyme catalyses urea + 2 H2O + H(+) = hydrogencarbonate + 2 NH4(+). The protein operates within nitrogen metabolism; urea degradation; CO(2) and NH(3) from urea (urease route): step 1/1. The sequence is that of Urease subunit alpha from Hahella chejuensis (strain KCTC 2396).